Consider the following 555-residue polypeptide: Benzoyl-CoA-dihydrodiol lyase (555 aa).

This sequence belongs to the benzoyl-CoA oxygenase component C family. In terms of assembly, homodimer.

It catalyses the reaction 2,3-epoxy-2,3-dihydrobenzoyl-CoA + 2 H2O = (3Z)-6-oxohex-3-enoyl-CoA + formate + H(+). Catalyzes the ring opening of 2,3-epoxy-2,3-dihydroxybenzoyl-CoA to form 3,4-didehydroadipyl-CoA semialdehyde. The sequence is that of Benzoyl-CoA-dihydrodiol lyase (boxC) from Aromatoleum evansii (Azoarcus evansii).